A 196-amino-acid chain; its full sequence is Large ribosomal subunit protein uL5 (196 aa).

It belongs to the universal ribosomal protein uL5 family. Part of the 50S ribosomal subunit; part of the 5S rRNA/L5/L18/L25 subcomplex. Contacts the 5S rRNA and the P site tRNA. Forms a bridge to the 30S subunit in the 70S ribosome.

Its function is as follows. This is one of the proteins that bind and probably mediate the attachment of the 5S RNA into the large ribosomal subunit, where it forms part of the central protuberance. In the 70S ribosome it contacts protein S13 of the 30S subunit (bridge B1b), connecting the 2 subunits; this bridge is implicated in subunit movement. Contacts the P site tRNA; the 5S rRNA and some of its associated proteins might help stabilize positioning of ribosome-bound tRNAs. This chain is Large ribosomal subunit protein uL5, found in Acidothermus cellulolyticus (strain ATCC 43068 / DSM 8971 / 11B).